A 386-amino-acid polypeptide reads, in one-letter code: Glyceraldehyde-3-phosphate dehydrogenase, chloroplastic (386 aa).

The transit peptide at 1–45 (MAYFKAVAYLAALASAAAFNPGSSFVPRLNAPATQPKAAKMTGPT) directs the protein to the chloroplast. NADP(+)-binding positions include 58–59 (RI) and Arg-125. D-glyceraldehyde 3-phosphate contacts are provided by residues 197-199 (SCT), Thr-228, 257-258 (TG), and Arg-280. Cys-198 (nucleophile) is an active-site residue. Residue Asn-362 participates in NADP(+) binding.

This sequence belongs to the glyceraldehyde-3-phosphate dehydrogenase family. In terms of assembly, homotetramer.

The protein resides in the plastid. Its subcellular location is the chloroplast. It catalyses the reaction D-glyceraldehyde 3-phosphate + phosphate + NADP(+) = (2R)-3-phospho-glyceroyl phosphate + NADPH + H(+). The enzyme catalyses D-glyceraldehyde 3-phosphate + phosphate + NAD(+) = (2R)-3-phospho-glyceroyl phosphate + NADH + H(+). It functions in the pathway carbohydrate biosynthesis; Calvin cycle. The polypeptide is Glyceraldehyde-3-phosphate dehydrogenase, chloroplastic (GAPC1) (Guillardia theta (Cryptophyte)).